A 113-amino-acid polypeptide reads, in one-letter code: Large ribosomal subunit protein uL22 (113 aa).

It belongs to the universal ribosomal protein uL22 family. In terms of assembly, part of the 50S ribosomal subunit.

In terms of biological role, this protein binds specifically to 23S rRNA; its binding is stimulated by other ribosomal proteins, e.g. L4, L17, and L20. It is important during the early stages of 50S assembly. It makes multiple contacts with different domains of the 23S rRNA in the assembled 50S subunit and ribosome. Functionally, the globular domain of the protein is located near the polypeptide exit tunnel on the outside of the subunit, while an extended beta-hairpin is found that lines the wall of the exit tunnel in the center of the 70S ribosome. The protein is Large ribosomal subunit protein uL22 of Geobacillus sp. (strain WCH70).